A 442-amino-acid chain; its full sequence is tRNA modification GTPase MnmE (442 aa).

Residues Arg24, Glu82, and Lys122 each coordinate (6S)-5-formyl-5,6,7,8-tetrahydrofolate. The 148-residue stretch at 219–366 folds into the TrmE-type G domain; it reads GFKVALVGEP…LRRALKREIE (148 aa). Asn229 contacts K(+). Residues 229–234, 248–254, and 273–276 each bind GTP; these read NAGKST, TDIAGTT, and DTAG. Mg(2+) is bound at residue Ser233. K(+)-binding residues include Thr248, Ile250, and Thr253. Thr254 lines the Mg(2+) pocket. Lys442 lines the (6S)-5-formyl-5,6,7,8-tetrahydrofolate pocket.

This sequence belongs to the TRAFAC class TrmE-Era-EngA-EngB-Septin-like GTPase superfamily. TrmE GTPase family. Homodimer. Heterotetramer of two MnmE and two MnmG subunits. The cofactor is K(+).

The protein localises to the cytoplasm. Exhibits a very high intrinsic GTPase hydrolysis rate. Involved in the addition of a carboxymethylaminomethyl (cmnm) group at the wobble position (U34) of certain tRNAs, forming tRNA-cmnm(5)s(2)U34. This Agrobacterium fabrum (strain C58 / ATCC 33970) (Agrobacterium tumefaciens (strain C58)) protein is tRNA modification GTPase MnmE.